The primary structure comprises 223 residues: Thiopurine S-methyltransferase (223 aa).

Residues W10, L45, E66, and R127 each contribute to the S-adenosyl-L-methionine site.

This sequence belongs to the class I-like SAM-binding methyltransferase superfamily. TPMT family.

Its subcellular location is the cytoplasm. The enzyme catalyses S-adenosyl-L-methionine + a thiopurine = S-adenosyl-L-homocysteine + a thiopurine S-methylether.. This is Thiopurine S-methyltransferase from Shewanella woodyi (strain ATCC 51908 / MS32).